A 933-amino-acid polypeptide reads, in one-letter code: Valine--tRNA ligase (933 aa).

The 'HIGH' region motif lies at 58-68 (PNVTGSLHMGH). Residues 556–560 (KMSKS) carry the 'KMSKS' region motif. Lys559 provides a ligand contact to ATP. Coiled-coil stretches lie at residues 807 to 833 (VTKN…ANKV) and 864 to 933 (EGLV…LGLK).

This sequence belongs to the class-I aminoacyl-tRNA synthetase family. ValS type 1 subfamily. In terms of assembly, monomer.

Its subcellular location is the cytoplasm. It carries out the reaction tRNA(Val) + L-valine + ATP = L-valyl-tRNA(Val) + AMP + diphosphate. Functionally, catalyzes the attachment of valine to tRNA(Val). As ValRS can inadvertently accommodate and process structurally similar amino acids such as threonine, to avoid such errors, it has a 'posttransfer' editing activity that hydrolyzes mischarged Thr-tRNA(Val) in a tRNA-dependent manner. This is Valine--tRNA ligase from Prochlorococcus marinus (strain SARG / CCMP1375 / SS120).